Here is a 182-residue protein sequence, read N- to C-terminus: Large ribosomal subunit protein uL5 (182 aa).

It belongs to the universal ribosomal protein uL5 family. In terms of assembly, part of the 50S ribosomal subunit; part of the 5S rRNA/L5/L18/L25 subcomplex. Contacts the 5S rRNA and the P site tRNA. Forms a bridge to the 30S subunit in the 70S ribosome.

In terms of biological role, this is one of the proteins that bind and probably mediate the attachment of the 5S RNA into the large ribosomal subunit, where it forms part of the central protuberance. In the 70S ribosome it contacts protein S13 of the 30S subunit (bridge B1b), connecting the 2 subunits; this bridge is implicated in subunit movement. Contacts the P site tRNA; the 5S rRNA and some of its associated proteins might help stabilize positioning of ribosome-bound tRNAs. The sequence is that of Large ribosomal subunit protein uL5 from Coxiella burnetii (strain CbuK_Q154) (Coxiella burnetii (strain Q154)).